A 615-amino-acid chain; its full sequence is Filament-like plant protein 3 (615 aa).

Positions 1–18 (MDRRSWLWRRKSSEKSPG) are enriched in basic and acidic residues. The segment at 1-55 (MDRRSWLWRRKSSEKSPGETESTGSVSSHSERFSDDQRSQSPELNSKPVTREEEA) is disordered. Residues 19–28 (ETESTGSVSS) show a composition bias toward polar residues. Residues 29–38 (HSERFSDDQR) show a composition bias toward basic and acidic residues. Polar residues predominate over residues 39-48 (SQSPELNSKP). Coiled-coil stretches lie at residues 87-121 (AEEA…LEDR) and 148-211 (EEAI…KSEE). Disordered regions lie at residues 258-289 (DNSS…SPSE) and 319-343 (PHSE…HVNQ). Polar residues predominate over residues 262–288 (DLKSSIDNQSDYSGRVSFSDNEMQSPS). Residues 322–343 (EPGRKHSESNKELEKSNAHVNQ) are compositionally biased toward basic and acidic residues. Positions 327–563 (HSESNKELEK…KQELEHHQET (237 aa)) form a coiled coil.

It belongs to the FPP family. Interacts with WPP/MAF proteins. Binds to COG2; this interaction promotes the association between cortical microtubules and EXO70A1. As to expression, accumulates in preferentially xylem cells.

It localises to the vesicle. Its function is as follows. Ensures, when in complex with COG2 and FPP2/VETH2, the correct secondary cell wall (SCW) deposition pattern by recruiting exocyst components to cortical microtubules in xylem cells during secondary cell wall deposition by recruiting EXO70A1. The polypeptide is Filament-like plant protein 3 (Arabidopsis thaliana (Mouse-ear cress)).